The sequence spans 268 residues: 4-hydroxy-tetrahydrodipicolinate reductase (268 aa).

NAD(+)-binding positions include 7–12 and Glu-33; that span reads GAGGRM. Position 34 (Arg-34) interacts with NADP(+). NAD(+) is bound by residues 97 to 99 and 121 to 124; these read GTT and SGNM. Residue His-155 is the Proton donor/acceptor of the active site. His-156 lines the (S)-2,3,4,5-tetrahydrodipicolinate pocket. Residue Lys-159 is the Proton donor of the active site. Position 165 to 166 (165 to 166) interacts with (S)-2,3,4,5-tetrahydrodipicolinate; sequence GT.

This sequence belongs to the DapB family.

The protein localises to the cytoplasm. It carries out the reaction (S)-2,3,4,5-tetrahydrodipicolinate + NAD(+) + H2O = (2S,4S)-4-hydroxy-2,3,4,5-tetrahydrodipicolinate + NADH + H(+). The catalysed reaction is (S)-2,3,4,5-tetrahydrodipicolinate + NADP(+) + H2O = (2S,4S)-4-hydroxy-2,3,4,5-tetrahydrodipicolinate + NADPH + H(+). The protein operates within amino-acid biosynthesis; L-lysine biosynthesis via DAP pathway; (S)-tetrahydrodipicolinate from L-aspartate: step 4/4. Its function is as follows. Catalyzes the conversion of 4-hydroxy-tetrahydrodipicolinate (HTPA) to tetrahydrodipicolinate. This is 4-hydroxy-tetrahydrodipicolinate reductase from Brucella abortus (strain 2308).